Here is a 329-residue protein sequence, read N- to C-terminus: Clavesin-2 (329 aa).

The CRAL-TRIO domain maps to 96-257; it reads IKQALKDGFP…ELGGMLPPYD (162 aa). Positions 293-329 are disordered; it reads SPKTMKRSQSVVEPGVLKRPEKVKSEEENMQPLLSLD. Residues 308-319 show a composition bias toward basic and acidic residues; it reads VLKRPEKVKSEE.

Its subcellular location is the golgi apparatus. It localises to the trans-Golgi network membrane. It is found in the early endosome membrane. The protein resides in the cytoplasmic vesicle. The protein localises to the clathrin-coated vesicle. Its function is as follows. Required for normal morphology of late endosomes and/or lysosomes in neurons. Binds phosphatidylinositol 3,5-bisphosphate (PtdIns(3,5)P2). The polypeptide is Clavesin-2 (clvs2) (Danio rerio (Zebrafish)).